The chain runs to 503 residues: Arabinose import ATP-binding protein AraG 1 (503 aa).

2 consecutive ABC transporter domains span residues 5–240 (LRFD…MVGR) and 251–497 (RALG…LPQT). ATP is bound at residue 37-44 (GENGAGKS).

It belongs to the ABC transporter superfamily. Arabinose importer (TC 3.A.1.2.2) family. As to quaternary structure, the complex is composed of two ATP-binding proteins (AraG), two transmembrane proteins (AraH) and a solute-binding protein (AraF).

It is found in the cell inner membrane. It carries out the reaction L-arabinose(out) + ATP + H2O = L-arabinose(in) + ADP + phosphate + H(+). Functionally, part of the ABC transporter complex AraFGH involved in arabinose import. Responsible for energy coupling to the transport system. The sequence is that of Arabinose import ATP-binding protein AraG 1 from Burkholderia lata (strain ATCC 17760 / DSM 23089 / LMG 22485 / NCIMB 9086 / R18194 / 383).